Reading from the N-terminus, the 619-residue chain is TOX high mobility group box family member 4 (619 aa).

Disordered stretches follow at residues 155 to 227 (LSLG…QKPV) and 306 to 335 (DPVP…TESP). Phosphothreonine is present on Thr176. Phosphoserine is present on residues Ser178 and Ser182. Residues 183–193 (LHEDGVDDFRR) are compositionally biased toward basic and acidic residues. Basic residues predominate over residues 208–218 (KQKAPKKRKKK). Residues 213 to 218 (KKRKKK) carry the Nuclear localization signal motif. A DNA-binding region (HMG box) is located at residues 223–291 (PQKPVSAYAL…EYLKALAAYK (69 aa)). Thr313 is subject to Phosphothreonine. At Ser315 the chain carries Phosphoserine. Over residues 320–335 (TAADPASPAPASTESP) the composition is skewed to low complexity. Arg479 carries the asymmetric dimethylarginine modification. A phosphoserine mark is found at Ser531, Ser548, Ser550, Ser558, Ser560, and Ser565.

In terms of assembly, component of the PNUTS-PP1 phosphatase complex, composed of PPP1R10/PNUTS, TOX4, WDR82 and PPP1CA or PPP1CB or PPP1CC. Interacts with PPP1R10/PNUTS. Interacts with FOXO1 and CREB1 (increased by cAMP); FOXO1 and CREB1 are required for full induction of TOX4-dependent activity and the interactions are inhibited by insulin.

It is found in the nucleus. Its subcellular location is the chromosome. Its activity is regulated as follows. In liver, recruited to target gene promoters following treatment with dexamethasone and cAMP. Binding is decreased in presence of insulin. Transcription factor that modulates cell fate reprogramming from the somatic state to the pluripotent and neuronal fate. In liver, controls the expression of hormone-regulated gluconeogenic genes such as G6PC1 and PCK1. This regulation is independent of the insulin receptor activation. Also acts as a regulatory component of protein phosphatase 1 (PP1) complexes. Component of the PNUTS-PP1 protein phosphatase complex, a PP1 complex that regulates RNA polymerase II transcription pause-release. PNUTS-PP1 also plays a role in the control of chromatin structure and cell cycle progression during the transition from mitosis into interphase. In Mus musculus (Mouse), this protein is TOX high mobility group box family member 4.